The chain runs to 101 residues: Large ribosomal subunit protein bL28 (101 aa).

This sequence belongs to the bacterial ribosomal protein bL28 family.

In Methylorubrum populi (strain ATCC BAA-705 / NCIMB 13946 / BJ001) (Methylobacterium populi), this protein is Large ribosomal subunit protein bL28.